We begin with the raw amino-acid sequence, 391 residues long: MTQPAILVLEDGTVFEGESVGANGLSVGEVVFNTAMTGYQEVLTDPSYARQMVTLTYPHIGNTGFTDQDDEARKIWAAGLIVRDVPRRPSNWRSQVALPEWLQARGVVAISGIDTRKLTRLLRQKGAQNGALMAGDIDVEKALEAARKFPGLKGMDLAKVVSTESTYNWKEGSLDLNSDSFLGLGALNIGKSAHASAGSGEELAFKVVAYDYGVKLNILRMLAERGCDVTVVPARTPVAEVLALQPDGVFLSNGPGDPEPCDYAIDAIKELIAQKVPTFGICLGHQLLALAAGAKTLKMTTGHHGANHPVQDLDGGRVMITSQNHGFAVDESTLPANVRVTHRSLFDGTNQGIALTDAPAFSFQGHPEASPGPRDVGPLFDRFVDLMAARA.

The segment at 1 to 202 (MTQPAILVLE…AHASAGSGEE (202 aa)) is CPSase. Residues serine 47, glycine 254, and glycine 256 each coordinate L-glutamine. The Glutamine amidotransferase type-1 domain occupies 206 to 391 (KVVAYDYGVK…RFVDLMAARA (186 aa)). The Nucleophile role is filled by cysteine 282. Residues leucine 283, glutamine 286, asparagine 324, glycine 326, and phenylalanine 327 each contribute to the L-glutamine site. Catalysis depends on residues histidine 366 and glutamate 368.

This sequence belongs to the CarA family. Composed of two chains; the small (or glutamine) chain promotes the hydrolysis of glutamine to ammonia, which is used by the large (or ammonia) chain to synthesize carbamoyl phosphate. Tetramer of heterodimers (alpha,beta)4.

The catalysed reaction is hydrogencarbonate + L-glutamine + 2 ATP + H2O = carbamoyl phosphate + L-glutamate + 2 ADP + phosphate + 2 H(+). It catalyses the reaction L-glutamine + H2O = L-glutamate + NH4(+). Its pathway is amino-acid biosynthesis; L-arginine biosynthesis; carbamoyl phosphate from bicarbonate: step 1/1. It functions in the pathway pyrimidine metabolism; UMP biosynthesis via de novo pathway; (S)-dihydroorotate from bicarbonate: step 1/3. Small subunit of the glutamine-dependent carbamoyl phosphate synthetase (CPSase). CPSase catalyzes the formation of carbamoyl phosphate from the ammonia moiety of glutamine, carbonate, and phosphate donated by ATP, constituting the first step of 2 biosynthetic pathways, one leading to arginine and/or urea and the other to pyrimidine nucleotides. The small subunit (glutamine amidotransferase) binds and cleaves glutamine to supply the large subunit with the substrate ammonia. This is Carbamoyl phosphate synthase small chain from Xanthomonas axonopodis pv. citri (strain 306).